Here is a 354-residue protein sequence, read N- to C-terminus: Holliday junction branch migration complex subunit RuvB (354 aa).

The span at 1–10 shows a compositional bias: polar residues; that stretch reads MAIKRNQGSN. The tract at residues 1–36 is disordered; that stretch reads MAIKRNQGSNPKPEKKERLTKAETHQEQDNLEESIR. The span at 12–36 shows a compositional bias: basic and acidic residues; that stretch reads KPEKKERLTKAETHQEQDNLEESIR. Positions 13–196 are large ATPase domain (RuvB-L); sequence PEKKERLTKA…FGLIQRLKFY (184 aa). ATP is bound by residues I35, R36, G77, K80, T81, T82, 143–145, R186, Y196, and R233; that span reads EDY. T81 provides a ligand contact to Mg(2+). Positions 197 to 267 are small ATPAse domain (RuvB-S); the sequence is EPEELALIIK…LAAEALDIYQ (71 aa). The segment at 270–354 is head domain (RuvB-H); the sequence is PQGLDWTDRL…EEQLSIFSEQ (85 aa). Residues R325 and R330 each coordinate DNA.

It belongs to the RuvB family. In terms of assembly, homohexamer. Forms an RuvA(8)-RuvB(12)-Holliday junction (HJ) complex. HJ DNA is sandwiched between 2 RuvA tetramers; dsDNA enters through RuvA and exits via RuvB. An RuvB hexamer assembles on each DNA strand where it exits the tetramer. Each RuvB hexamer is contacted by two RuvA subunits (via domain III) on 2 adjacent RuvB subunits; this complex drives branch migration. In the full resolvosome a probable DNA-RuvA(4)-RuvB(12)-RuvC(2) complex forms which resolves the HJ.

The protein localises to the cytoplasm. The catalysed reaction is ATP + H2O = ADP + phosphate + H(+). The RuvA-RuvB-RuvC complex processes Holliday junction (HJ) DNA during genetic recombination and DNA repair, while the RuvA-RuvB complex plays an important role in the rescue of blocked DNA replication forks via replication fork reversal (RFR). RuvA specifically binds to HJ cruciform DNA, conferring on it an open structure. The RuvB hexamer acts as an ATP-dependent pump, pulling dsDNA into and through the RuvAB complex. RuvB forms 2 homohexamers on either side of HJ DNA bound by 1 or 2 RuvA tetramers; 4 subunits per hexamer contact DNA at a time. Coordinated motions by a converter formed by DNA-disengaged RuvB subunits stimulates ATP hydrolysis and nucleotide exchange. Immobilization of the converter enables RuvB to convert the ATP-contained energy into a lever motion, pulling 2 nucleotides of DNA out of the RuvA tetramer per ATP hydrolyzed, thus driving DNA branch migration. The RuvB motors rotate together with the DNA substrate, which together with the progressing nucleotide cycle form the mechanistic basis for DNA recombination by continuous HJ branch migration. Branch migration allows RuvC to scan DNA until it finds its consensus sequence, where it cleaves and resolves cruciform DNA. This is Holliday junction branch migration complex subunit RuvB from Crocosphaera subtropica (strain ATCC 51142 / BH68) (Cyanothece sp. (strain ATCC 51142)).